A 101-amino-acid polypeptide reads, in one-letter code: MKIKKGDEVIVIAGKDKGATGKVKKALPKEQRVIVEGVNLIKKHKKANQAGGQQGEVVTLEAPIHVSNVALLEDGRPTRVGYRFKEDGTKVRISRRTGKEI.

The protein belongs to the universal ribosomal protein uL24 family. Part of the 50S ribosomal subunit.

Its function is as follows. One of two assembly initiator proteins, it binds directly to the 5'-end of the 23S rRNA, where it nucleates assembly of the 50S subunit. One of the proteins that surrounds the polypeptide exit tunnel on the outside of the subunit. The polypeptide is Large ribosomal subunit protein uL24 (Thermobifida fusca (strain YX)).